Consider the following 138-residue polypeptide: Translation initiation factor 5A (138 aa).

Lys37 is modified (hypusine).

This sequence belongs to the eIF-5A family.

It is found in the cytoplasm. Functionally, functions by promoting the formation of the first peptide bond. In Pyrococcus horikoshii (strain ATCC 700860 / DSM 12428 / JCM 9974 / NBRC 100139 / OT-3), this protein is Translation initiation factor 5A (eif5a).